Here is a 243-residue protein sequence, read N- to C-terminus: Ribonuclease PH (243 aa).

Phosphate is bound by residues Arg91 and 129-131 (GTR).

This sequence belongs to the RNase PH family. Homohexameric ring arranged as a trimer of dimers.

The enzyme catalyses tRNA(n+1) + phosphate = tRNA(n) + a ribonucleoside 5'-diphosphate. Functionally, phosphorolytic 3'-5' exoribonuclease that plays an important role in tRNA 3'-end maturation. Removes nucleotide residues following the 3'-CCA terminus of tRNAs; can also add nucleotides to the ends of RNA molecules by using nucleoside diphosphates as substrates, but this may not be physiologically important. Probably plays a role in initiation of 16S rRNA degradation (leading to ribosome degradation) during starvation. The polypeptide is Ribonuclease PH (Burkholderia lata (strain ATCC 17760 / DSM 23089 / LMG 22485 / NCIMB 9086 / R18194 / 383)).